Reading from the N-terminus, the 310-residue chain is tRNA pseudouridine synthase B (310 aa).

D49 serves as the catalytic Nucleophile.

It belongs to the pseudouridine synthase TruB family. Type 1 subfamily.

The catalysed reaction is uridine(55) in tRNA = pseudouridine(55) in tRNA. Its function is as follows. Responsible for synthesis of pseudouridine from uracil-55 in the psi GC loop of transfer RNAs. The polypeptide is tRNA pseudouridine synthase B (Rhizobium etli (strain ATCC 51251 / DSM 11541 / JCM 21823 / NBRC 15573 / CFN 42)).